A 121-amino-acid chain; its full sequence is Ig heavy chain V region MPC 11 (121 aa).

One can recognise an Ig-like domain in the interval 1–112 (EAQLQQSGAE…NSSPYFDSWG (112 aa)).

This Mus musculus (Mouse) protein is Ig heavy chain V region MPC 11.